Consider the following 523-residue polypeptide: AarF domain-containing protein kinase 1 (523 aa).

Residues 148–484 (EFEEKPLGAA…SLWSYIHISL (337 aa)) form the Protein kinase domain. ATP is bound by residues 154 to 162 (LGAASLAQV) and Lys176. Residue Asp308 is the Proton acceptor of the active site.

The protein belongs to the protein kinase superfamily. ADCK protein kinase family.

Its subcellular location is the mitochondrion. Appears to be essential for maintaining mitochondrial cristae formation and mitochondrial function by acting via YME1L1 in a kinase-independent manner to regulate essential mitochondrial structural proteins OPA1 and IMMT. The action of this enzyme is not yet clear. It is not known if it has protein kinase activity and what type of substrate it would phosphorylate (Ser, Thr or Tyr). In Xenopus tropicalis (Western clawed frog), this protein is AarF domain-containing protein kinase 1 (adck1).